Consider the following 129-residue polypeptide: Large ribosomal subunit protein bL12c (129 aa).

The protein belongs to the bacterial ribosomal protein bL12 family. As to quaternary structure, homodimer. Part of the ribosomal stalk of the 50S ribosomal subunit. Forms a multimeric L10(L12)X complex, where L10 forms an elongated spine to which 2 to 4 L12 dimers bind in a sequential fashion. Binds GTP-bound translation factors.

It is found in the plastid. The protein localises to the chloroplast. Forms part of the ribosomal stalk which helps the ribosome interact with GTP-bound translation factors. Is thus essential for accurate translation. This Tupiella akineta (Green alga) protein is Large ribosomal subunit protein bL12c.